A 543-amino-acid chain; its full sequence is Carboxypeptidase Y homolog A (543 aa).

Residues 1–17 (MRVLPATLLVGAATAAA) form the signal peptide. Residues 18–124 (PPFQQILGLP…KLEAYDLRVK (107 aa)) constitute a propeptide that is removed on maturation. Intrachain disulfides connect cysteine 179–cysteine 419, cysteine 313–cysteine 327, cysteine 337–cysteine 360, cysteine 344–cysteine 353, and cysteine 382–cysteine 389. N-linked (GlcNAc...) asparagine glycosylation is present at asparagine 210. Residue serine 266 is part of the active site. Aspartate 458 is an active-site residue. Asparagine 509 carries N-linked (GlcNAc...) asparagine glycosylation. The active site involves histidine 520.

It belongs to the peptidase S10 family.

The protein resides in the vacuole. It carries out the reaction Release of a C-terminal amino acid with broad specificity.. Vacuolar carboxypeptidase involved in degradation of small peptides. Digests preferentially peptides containing an aliphatic or hydrophobic residue in P1' position, as well as methionine, leucine or phenylalanine in P1 position of ester substrate. The chain is Carboxypeptidase Y homolog A (cpyA) from Neosartorya fischeri (strain ATCC 1020 / DSM 3700 / CBS 544.65 / FGSC A1164 / JCM 1740 / NRRL 181 / WB 181) (Aspergillus fischerianus).